Here is a 201-residue protein sequence, read N- to C-terminus: Imidazoleglycerol-phosphate dehydratase (201 aa).

The protein belongs to the imidazoleglycerol-phosphate dehydratase family.

The protein localises to the cytoplasm. It carries out the reaction D-erythro-1-(imidazol-4-yl)glycerol 3-phosphate = 3-(imidazol-4-yl)-2-oxopropyl phosphate + H2O. Its pathway is amino-acid biosynthesis; L-histidine biosynthesis; L-histidine from 5-phospho-alpha-D-ribose 1-diphosphate: step 6/9. The chain is Imidazoleglycerol-phosphate dehydratase from Synechococcus sp. (strain CC9311).